The following is a 275-amino-acid chain: Diaminopimelate epimerase (275 aa).

Substrate is bound by residues Asn-12, Gln-45, and Asn-65. The active-site Proton donor is Cys-74. Residues 75–76, Asn-158, Asn-191, and 209–210 contribute to the substrate site; these read GN and ER. The active-site Proton acceptor is Cys-218. 219-220 provides a ligand contact to substrate; that stretch reads GS.

The protein belongs to the diaminopimelate epimerase family. In terms of assembly, homodimer.

The protein resides in the cytoplasm. It catalyses the reaction (2S,6S)-2,6-diaminopimelate = meso-2,6-diaminopimelate. It participates in amino-acid biosynthesis; L-lysine biosynthesis via DAP pathway; DL-2,6-diaminopimelate from LL-2,6-diaminopimelate: step 1/1. Functionally, catalyzes the stereoinversion of LL-2,6-diaminopimelate (L,L-DAP) to meso-diaminopimelate (meso-DAP), a precursor of L-lysine and an essential component of the bacterial peptidoglycan. The protein is Diaminopimelate epimerase of Shewanella amazonensis (strain ATCC BAA-1098 / SB2B).